A 915-amino-acid polypeptide reads, in one-letter code: Protein translocase subunit SecA (915 aa).

ATP-binding positions include Gln-87, 105–109, and Asp-516; that span reads GEGKT. The segment at 866 to 915 is disordered; the sequence is MTYGAPSDGDIGGSVEDEPLELPEGARVGRNDPCPCGSGKKYKQCHGKLS. Residues Cys-899, Cys-901, Cys-910, and His-911 each coordinate Zn(2+). Residues 905 to 915 are compositionally biased toward basic residues; it reads KKYKQCHGKLS.

The protein belongs to the SecA family. Monomer and homodimer. Part of the essential Sec protein translocation apparatus which comprises SecA, SecYEG and auxiliary proteins SecDF-YajC and YidC. Requires Zn(2+) as cofactor.

The protein resides in the cell inner membrane. It is found in the cytoplasm. The catalysed reaction is ATP + H2O + cellular proteinSide 1 = ADP + phosphate + cellular proteinSide 2.. Its function is as follows. Part of the Sec protein translocase complex. Interacts with the SecYEG preprotein conducting channel. Has a central role in coupling the hydrolysis of ATP to the transfer of proteins into and across the cell membrane, serving both as a receptor for the preprotein-SecB complex and as an ATP-driven molecular motor driving the stepwise translocation of polypeptide chains across the membrane. This Delftia acidovorans (strain DSM 14801 / SPH-1) protein is Protein translocase subunit SecA.